A 591-amino-acid chain; its full sequence is Probable cyclin-dependent kinase 9 (591 aa).

The interval 1–385 is interaction with pch1; that stretch reads MKRSSSVSVE…FEQTANGKRQ (385 aa). Residues 36 to 339 enclose the Protein kinase domain; that stretch reads YHLMEKLGEG…ASMALEHEYF (304 aa). ATP is bound by residues 42 to 50 and K65; that span reads LGEGTFGEV. The active-site Proton acceptor is the D166. The residue at position 211 (Y211) is a Phosphotyrosine. T212 is modified (phosphothreonine). 2 disordered regions span residues 341 to 534 and 549 to 591; these read TPPY…KTQH and ARQS…DTPK. A compositionally biased stretch (basic and acidic residues) spans 358–372; sequence HEYDKRRKREQRDAN. 2 stretches are compositionally biased toward polar residues: residues 404 to 415 and 428 to 465; these read NYNSQPQYQRGS and NVNY…TSNH. A binds to pct1 region spans residues 442–523; the sequence is LTSDLPQKNS…NSKVQTTSRA (82 aa). Basic and acidic residues predominate over residues 466 to 482; that stretch reads SHADGQRYYRPEQDRSQ. Residues 491-502 show a composition bias toward low complexity; the sequence is GRQGRQSSQSQQ. Positions 503–534 are enriched in polar residues; sequence PAWNVSSRYQNNSKVQTTSRASENADTNKTQH. T565 carries the phosphothreonine modification. A Phosphoserine modification is found at S577.

The protein belongs to the protein kinase superfamily. CMGC Ser/Thr protein kinase family. CDC2/CDKX subfamily. As to quaternary structure, interacts with pch1 cyclin via its N-terminal domain. Via its C-terminal domain, interacts with RNA triphosphatase pct1 which is involved in mRNA capping. Also interacts with pcm1.

Its subcellular location is the nucleus. It carries out the reaction L-seryl-[protein] + ATP = O-phospho-L-seryl-[protein] + ADP + H(+). The catalysed reaction is L-threonyl-[protein] + ATP = O-phospho-L-threonyl-[protein] + ADP + H(+). It catalyses the reaction [DNA-directed RNA polymerase] + ATP = phospho-[DNA-directed RNA polymerase] + ADP + H(+). Its activity is regulated as follows. May be activated by autophosphorylation or phosphorylation by a separate activating kinase. In terms of biological role, component of the positive transcription elongation factor b (P-TEFb) which consists of cdk9 and pch1, and which phosphorylates the C-terminal domain (CTD) of RNA polymerase II and spt5. This Schizosaccharomyces pombe (strain 972 / ATCC 24843) (Fission yeast) protein is Probable cyclin-dependent kinase 9 (cdk9).